A 218-amino-acid polypeptide reads, in one-letter code: Large ribosomal subunit protein bL25 (218 aa).

Disordered stretches follow at residues 1-20 (MKTHELKASPRTTRGNGPAR) and 185-218 (PTAAALPEEGEEGEEGEEGGEGGEAEGAEAASEE). Residues 192–218 (EEGEEGEEGEEGGEGGEAEGAEAASEE) show a composition bias toward acidic residues.

It belongs to the bacterial ribosomal protein bL25 family. CTC subfamily. Part of the 50S ribosomal subunit; part of the 5S rRNA/L5/L18/L25 subcomplex. Contacts the 5S rRNA. Binds to the 5S rRNA independently of L5 and L18.

Its function is as follows. This is one of the proteins that binds to the 5S RNA in the ribosome where it forms part of the central protuberance. The chain is Large ribosomal subunit protein bL25 from Desulfatibacillum aliphaticivorans.